Consider the following 226-residue polypeptide: Leucyl/phenylalanyl-tRNA--protein transferase (226 aa).

The protein belongs to the L/F-transferase family.

The protein resides in the cytoplasm. It catalyses the reaction N-terminal L-lysyl-[protein] + L-leucyl-tRNA(Leu) = N-terminal L-leucyl-L-lysyl-[protein] + tRNA(Leu) + H(+). The enzyme catalyses N-terminal L-arginyl-[protein] + L-leucyl-tRNA(Leu) = N-terminal L-leucyl-L-arginyl-[protein] + tRNA(Leu) + H(+). The catalysed reaction is L-phenylalanyl-tRNA(Phe) + an N-terminal L-alpha-aminoacyl-[protein] = an N-terminal L-phenylalanyl-L-alpha-aminoacyl-[protein] + tRNA(Phe). Functions in the N-end rule pathway of protein degradation where it conjugates Leu, Phe and, less efficiently, Met from aminoacyl-tRNAs to the N-termini of proteins containing an N-terminal arginine or lysine. This is Leucyl/phenylalanyl-tRNA--protein transferase from Stutzerimonas stutzeri (strain A1501) (Pseudomonas stutzeri).